A 429-amino-acid chain; its full sequence is Nucleotide exchange factor Sil1 (429 aa).

An N-terminal signal peptide occupies residues 1–24; that stretch reads MSGKQVVILLGSVLILGCLQVAAA. An N-linked (GlcNAc...) asparagine glycan is attached at Asn29. The disordered stretch occupies residues 70–98; sequence DESERGTSLQSQPDDQNARESHDDNEPLA. A compositionally biased stretch (polar residues) spans 75–84; the sequence is GTSLQSQPDD. Basic and acidic residues predominate over residues 85 to 94; the sequence is QNARESHDDN. Residues 104–135 are a coiled coil; it reads DIIEESIRRVKEQKKSYAELRKAYKEFQKNFR. N-linked (GlcNAc...) asparagine glycosylation is found at Asn150, Asn199, and Asn400. The Prevents secretion from ER signature appears at 426–429; the sequence is HTEL.

This sequence belongs to the SIL1 family.

It localises to the endoplasmic reticulum lumen. Its function is as follows. Required for protein translocation and folding in the endoplasmic reticulum (ER). Functions as a nucleotide exchange factor for an ER lumenal chaperone of HSP70 family. In Drosophila melanogaster (Fruit fly), this protein is Nucleotide exchange factor Sil1.